A 351-amino-acid chain; its full sequence is Ribonucleoside-diphosphate reductase subunit M2 B (351 aa).

Positions Met1–Glu31 are disordered. Residues Asp100, Glu131, and His134 each coordinate Fe cation. Tyr138 is a catalytic residue. Positions 194, 228, and 231 each coordinate Fe cation.

The protein belongs to the ribonucleoside diphosphate reductase small chain family. As to quaternary structure, heterotetramer with large (RRM1) subunit. Interacts with p53/TP53. Interacts with RRM1 in response to DNA damage. Fe cation is required as a cofactor.

The protein localises to the cytoplasm. The protein resides in the nucleus. It carries out the reaction a 2'-deoxyribonucleoside 5'-diphosphate + [thioredoxin]-disulfide + H2O = a ribonucleoside 5'-diphosphate + [thioredoxin]-dithiol. Its function is as follows. Plays a pivotal role in cell survival by repairing damaged DNA in a p53/TP53-dependent manner. Supplies deoxyribonucleotides for DNA repair in cells arrested at G1 or G2. Contains an iron-tyrosyl free radical center required for catalysis. Forms an active ribonucleotide reductase (RNR) complex with RRM1 which is expressed both in resting and proliferating cells in response to DNA damage. The polypeptide is Ribonucleoside-diphosphate reductase subunit M2 B (RRM2B) (Pongo abelii (Sumatran orangutan)).